The chain runs to 363 residues: GTP-binding protein 1 (363 aa).

The OBG-type G domain occupies 63 to 287 (ARVAFIGFPS…LKERIWEELN (225 aa)). GTP-binding positions include 69-76 (GFPSVGKS), 115-119 (DLPGI), and 246-249 (KIDA). Positions 287–362 (NLYRIYTKRK…EEGDVVTIVT (76 aa)) constitute a TGS domain.

It belongs to the TRAFAC class OBG-HflX-like GTPase superfamily. OBG GTPase family.

The chain is GTP-binding protein 1 (gtp1) from Schizosaccharomyces pombe (strain 972 / ATCC 24843) (Fission yeast).